The following is a 691-amino-acid chain: Elongation factor G (691 aa).

The tr-type G domain maps to 12–286; it reads NKLRNIGIMA…GIVRYLPSPL (275 aa). GTP contacts are provided by residues 21-28, 85-89, and 139-142; these read AHIDAGKT, DTPGH, and NKMD.

Belongs to the TRAFAC class translation factor GTPase superfamily. Classic translation factor GTPase family. EF-G/EF-2 subfamily.

The protein localises to the cytoplasm. Functionally, catalyzes the GTP-dependent ribosomal translocation step during translation elongation. During this step, the ribosome changes from the pre-translocational (PRE) to the post-translocational (POST) state as the newly formed A-site-bound peptidyl-tRNA and P-site-bound deacylated tRNA move to the P and E sites, respectively. Catalyzes the coordinated movement of the two tRNA molecules, the mRNA and conformational changes in the ribosome. The sequence is that of Elongation factor G from Fervidobacterium nodosum (strain ATCC 35602 / DSM 5306 / Rt17-B1).